The chain runs to 509 residues: Bifunctional purine biosynthesis protein PurH (509 aa).

The region spanning 1–144 is the MGS-like domain; the sequence is MKRALISVSD…KNYAAVTVVV (144 aa).

It belongs to the PurH family.

It catalyses the reaction (6R)-10-formyltetrahydrofolate + 5-amino-1-(5-phospho-beta-D-ribosyl)imidazole-4-carboxamide = 5-formamido-1-(5-phospho-D-ribosyl)imidazole-4-carboxamide + (6S)-5,6,7,8-tetrahydrofolate. The catalysed reaction is IMP + H2O = 5-formamido-1-(5-phospho-D-ribosyl)imidazole-4-carboxamide. Its pathway is purine metabolism; IMP biosynthesis via de novo pathway; 5-formamido-1-(5-phospho-D-ribosyl)imidazole-4-carboxamide from 5-amino-1-(5-phospho-D-ribosyl)imidazole-4-carboxamide (10-formyl THF route): step 1/1. It functions in the pathway purine metabolism; IMP biosynthesis via de novo pathway; IMP from 5-formamido-1-(5-phospho-D-ribosyl)imidazole-4-carboxamide: step 1/1. The polypeptide is Bifunctional purine biosynthesis protein PurH (Listeria monocytogenes serovar 1/2a (strain ATCC BAA-679 / EGD-e)).